Reading from the N-terminus, the 245-residue chain is Ribonuclease PH (245 aa).

Phosphate-binding positions include Arg-93 and 131 to 133; that span reads GTR.

The protein belongs to the RNase PH family. Homohexameric ring arranged as a trimer of dimers.

It carries out the reaction tRNA(n+1) + phosphate = tRNA(n) + a ribonucleoside 5'-diphosphate. In terms of biological role, phosphorolytic 3'-5' exoribonuclease that plays an important role in tRNA 3'-end maturation. Removes nucleotide residues following the 3'-CCA terminus of tRNAs; can also add nucleotides to the ends of RNA molecules by using nucleoside diphosphates as substrates, but this may not be physiologically important. Probably plays a role in initiation of 16S rRNA degradation (leading to ribosome degradation) during starvation. In Corynebacterium glutamicum (strain R), this protein is Ribonuclease PH.